A 218-amino-acid polypeptide reads, in one-letter code: N-(5'-phosphoribosyl)anthranilate isomerase (218 aa).

Belongs to the TrpF family.

It carries out the reaction N-(5-phospho-beta-D-ribosyl)anthranilate = 1-(2-carboxyphenylamino)-1-deoxy-D-ribulose 5-phosphate. The protein operates within amino-acid biosynthesis; L-tryptophan biosynthesis; L-tryptophan from chorismate: step 3/5. The sequence is that of N-(5'-phosphoribosyl)anthranilate isomerase from Alcanivorax borkumensis (strain ATCC 700651 / DSM 11573 / NCIMB 13689 / SK2).